We begin with the raw amino-acid sequence, 219 residues long: Thiamine-phosphate synthase (219 aa).

4-amino-2-methyl-5-(diphosphooxymethyl)pyrimidine contacts are provided by residues 48–52 (QFRQK) and Asn-84. Positions 85 and 104 each coordinate Mg(2+). 4-amino-2-methyl-5-(diphosphooxymethyl)pyrimidine is bound at residue Ser-123. 150–152 (TQS) contributes to the 2-[(2R,5Z)-2-carboxy-4-methylthiazol-5(2H)-ylidene]ethyl phosphate binding site. Lys-153 contributes to the 4-amino-2-methyl-5-(diphosphooxymethyl)pyrimidine binding site. 2-[(2R,5Z)-2-carboxy-4-methylthiazol-5(2H)-ylidene]ethyl phosphate contacts are provided by residues Gly-181 and 199 to 200 (IS).

The protein belongs to the thiamine-phosphate synthase family. Requires Mg(2+) as cofactor.

The enzyme catalyses 2-[(2R,5Z)-2-carboxy-4-methylthiazol-5(2H)-ylidene]ethyl phosphate + 4-amino-2-methyl-5-(diphosphooxymethyl)pyrimidine + 2 H(+) = thiamine phosphate + CO2 + diphosphate. It carries out the reaction 2-(2-carboxy-4-methylthiazol-5-yl)ethyl phosphate + 4-amino-2-methyl-5-(diphosphooxymethyl)pyrimidine + 2 H(+) = thiamine phosphate + CO2 + diphosphate. The catalysed reaction is 4-methyl-5-(2-phosphooxyethyl)-thiazole + 4-amino-2-methyl-5-(diphosphooxymethyl)pyrimidine + H(+) = thiamine phosphate + diphosphate. The protein operates within cofactor biosynthesis; thiamine diphosphate biosynthesis; thiamine phosphate from 4-amino-2-methyl-5-diphosphomethylpyrimidine and 4-methyl-5-(2-phosphoethyl)-thiazole: step 1/1. Functionally, condenses 4-methyl-5-(beta-hydroxyethyl)thiazole monophosphate (THZ-P) and 2-methyl-4-amino-5-hydroxymethyl pyrimidine pyrophosphate (HMP-PP) to form thiamine monophosphate (TMP). The chain is Thiamine-phosphate synthase from Helicobacter pylori (strain Shi470).